The following is a 741-amino-acid chain: Phosphoribosylformylglycinamidine synthase subunit PurL (741 aa).

His-53 is an active-site residue. ATP-binding residues include Tyr-56 and Lys-95. Glu-97 is a binding site for Mg(2+). Substrate is bound by residues 98 to 101 and Arg-120; that span reads SHNH. The active-site Proton acceptor is His-99. Asp-121 serves as a coordination point for Mg(2+). Gln-244 is a substrate binding site. Residue Asp-274 coordinates Mg(2+). 318–320 contributes to the substrate binding site; that stretch reads ESQ. ATP-binding residues include Asp-501 and Gly-538. Residue Asn-539 coordinates Mg(2+). Ser-541 contacts substrate.

Belongs to the FGAMS family. In terms of assembly, monomer. Part of the FGAM synthase complex composed of 1 PurL, 1 PurQ and 2 PurS subunits.

It is found in the cytoplasm. It carries out the reaction N(2)-formyl-N(1)-(5-phospho-beta-D-ribosyl)glycinamide + L-glutamine + ATP + H2O = 2-formamido-N(1)-(5-O-phospho-beta-D-ribosyl)acetamidine + L-glutamate + ADP + phosphate + H(+). It participates in purine metabolism; IMP biosynthesis via de novo pathway; 5-amino-1-(5-phospho-D-ribosyl)imidazole from N(2)-formyl-N(1)-(5-phospho-D-ribosyl)glycinamide: step 1/2. Part of the phosphoribosylformylglycinamidine synthase complex involved in the purines biosynthetic pathway. Catalyzes the ATP-dependent conversion of formylglycinamide ribonucleotide (FGAR) and glutamine to yield formylglycinamidine ribonucleotide (FGAM) and glutamate. The FGAM synthase complex is composed of three subunits. PurQ produces an ammonia molecule by converting glutamine to glutamate. PurL transfers the ammonia molecule to FGAR to form FGAM in an ATP-dependent manner. PurS interacts with PurQ and PurL and is thought to assist in the transfer of the ammonia molecule from PurQ to PurL. In Ligilactobacillus salivarius (strain UCC118) (Lactobacillus salivarius), this protein is Phosphoribosylformylglycinamidine synthase subunit PurL.